Consider the following 538-residue polypeptide: MPQVRNPILPGFNPDPSILRVGEDYYIATSTFEWYPGVQIHHSRDLANWELVARPLNRKSQLDMRGNPDSCGIWAPCLSHDGERFWLVYTDVKRKDGSFKDTPNYIVTAEKIEGPWSDPIYINSSGFDPSLFHDDDGRKWFVNMLWDHRRRPQLFEGIVLQEFDPKAGKLVGPRKNIFTGTDLALVEGPHLYKRNGWYYLLTAEGGTGYEHACTFARSRNIWGPYEVHPQKYILTSKDHPHAALQRAGHGDIVDTPDGRTYLVHLTGRPTTQFRRCVLGRETAIQEAYWGDDDWLYVKNGPVPSLWVDLPAARDDTKYWEEKRYTFESGLHKDFQWLRTPETDRIFRTREDGKLTLIGRESIGSWFEQALVARRQTHFSCDAETVIDFSPEDQRQFAGLTAYYCRYNFFYLAVSAHSDGQRELFIMASEASWPLGELRYPVPEGVRIPNEGKVRLALTIRGRELQFYYALEGEELKKIGPVLDASIVSDECGGHQKHGSFTGAFVGVAASDLNGTAAEATFDYFIYRPVQHPSDRYEI.

The active-site Proton donor is the Glu367.

It belongs to the glycosyl hydrolase 43 family.

It catalyses the reaction Hydrolysis of (1-&gt;4)-beta-D-xylans, to remove successive D-xylose residues from the non-reducing termini.. The catalysed reaction is Hydrolysis of terminal non-reducing alpha-L-arabinofuranoside residues in alpha-L-arabinosides.. Activity is inhibited by Ag(+), Li(+), Cu(2+), Cr(3+), Co(3+), Ni(2+), Mg(2+), Zn(2+), EDTA, SDS and beta-mercaptoethanol; but not by Mn(2+), Pb(2+), Ca(2+) and Fe(3+). Functionally, bifunctional beta-xylosidase/alpha-L-arabinosidases with a low level of xylanase activity. Is most active on 4-nitrophenyl beta-D-xylopyranoside (pNPX) (defined as 100%), moderate on p-nitrophenyl-alpha-L-arabinofuranoside (pNPA) (56.6%), and weak on beechwood xylan (5.7%) and birchwood xylan (2.7%). Is able to attack xylooligosacchardies with degrees of polymerisation of 2-5, releasing the amounts of reducing sugars in the order of xylopentose &gt; xylotetraose &gt; xylotriose &gt; xylobiose, i.e. the rate of xylose released from xylooligosacchardies increased with the chain length. No activity was detected in the presence of carboxymethyl cellulose-sodium (CMC-Na), sugar beet arabinan, AZCL-arabinan (debranched), 4-nitrophenyl a-D - galactopyranoside, 2-nitrophenyl beta-D-galactopyranoside, and 4-nitrophenyl alpha-D-glucopyranoside. The polypeptide is Xylosidase/arabinosidase 43B (Humicola insolens (Soft-rot fungus)).